Consider the following 246-residue polypeptide: Acetoacetyl-CoA reductase (246 aa).

Residues 13–15, G35, R40, 60–62, and 88–92 each bind NADP(+); these read GGI, GNV, and NAGIT. Substrate is bound by residues D94 and 147 to 150; that span reads QFGQ. Y153 (proton acceptor) is an active-site residue. 183-186 is an NADP(+) binding site; it reads PGYI. Substrate is bound by residues 184 to 185 and R195; that span reads GY.

The protein belongs to the short-chain dehydrogenases/reductases (SDR) family. Homotetramer.

Its subcellular location is the cytoplasm. The enzyme catalyses a (3R)-3-hydroxyacyl-CoA + NADP(+) = a 3-oxoacyl-CoA + NADPH + H(+). It catalyses the reaction (3R)-3-hydroxybutanoyl-CoA + NADP(+) = acetoacetyl-CoA + NADPH + H(+). Its pathway is biopolymer metabolism; poly-(R)-3-hydroxybutanoate biosynthesis. Catalyzes the chiral reduction of acetoacetyl-CoA to (R)-3-hydroxybutyryl-CoA. Is involved in the biosynthesis of polyhydroxybutyrate (PHB), which is accumulated as an intracellular energy reserve material when cells grow under conditions of nutrient limitation. In Cupriavidus necator (strain ATCC 17699 / DSM 428 / KCTC 22496 / NCIMB 10442 / H16 / Stanier 337) (Ralstonia eutropha), this protein is Acetoacetyl-CoA reductase.